Consider the following 426-residue polypeptide: Enolase (426 aa).

Q163 is a (2R)-2-phosphoglycerate binding site. Residue E205 is the Proton donor of the active site. Residues D242, E283, and D310 each coordinate Mg(2+). Residues K335, R364, S365, and K386 each coordinate (2R)-2-phosphoglycerate. K335 (proton acceptor) is an active-site residue.

The protein belongs to the enolase family. It depends on Mg(2+) as a cofactor.

The protein resides in the cytoplasm. Its subcellular location is the secreted. The protein localises to the cell surface. It carries out the reaction (2R)-2-phosphoglycerate = phosphoenolpyruvate + H2O. It functions in the pathway carbohydrate degradation; glycolysis; pyruvate from D-glyceraldehyde 3-phosphate: step 4/5. In terms of biological role, catalyzes the reversible conversion of 2-phosphoglycerate (2-PG) into phosphoenolpyruvate (PEP). It is essential for the degradation of carbohydrates via glycolysis. The protein is Enolase of Aquifex aeolicus (strain VF5).